The chain runs to 166 residues: Large ribosomal subunit protein uL10 (166 aa).

The protein belongs to the universal ribosomal protein uL10 family. As to quaternary structure, part of the ribosomal stalk of the 50S ribosomal subunit. The N-terminus interacts with L11 and the large rRNA to form the base of the stalk. The C-terminus forms an elongated spine to which L12 dimers bind in a sequential fashion forming a multimeric L10(L12)X complex.

Functionally, forms part of the ribosomal stalk, playing a central role in the interaction of the ribosome with GTP-bound translation factors. In Pelagibacter ubique (strain HTCC1062), this protein is Large ribosomal subunit protein uL10.